The following is a 157-amino-acid chain: Endoribonuclease YbeY (157 aa).

Residues H114, H118, and H124 each coordinate Zn(2+).

This sequence belongs to the endoribonuclease YbeY family. The cofactor is Zn(2+).

The protein resides in the cytoplasm. Functionally, single strand-specific metallo-endoribonuclease involved in late-stage 70S ribosome quality control and in maturation of the 3' terminus of the 16S rRNA. In Klebsiella pneumoniae (strain 342), this protein is Endoribonuclease YbeY.